Reading from the N-terminus, the 113-residue chain is Large ribosomal subunit protein bL19 (113 aa).

Belongs to the bacterial ribosomal protein bL19 family.

Its function is as follows. This protein is located at the 30S-50S ribosomal subunit interface and may play a role in the structure and function of the aminoacyl-tRNA binding site. The polypeptide is Large ribosomal subunit protein bL19 (Corynebacterium glutamicum (strain R)).